The primary structure comprises 359 residues: GDSL esterase/lipase At5g03610 (359 aa).

Residues Met-1–Gly-22 form the signal peptide. Ser-50 (nucleophile) is an active-site residue. Residues Asn-136, Asn-236, and Asn-259 are each glycosylated (N-linked (GlcNAc...) asparagine). Catalysis depends on residues Asp-332 and His-335.

This sequence belongs to the 'GDSL' lipolytic enzyme family.

It is found in the secreted. The chain is GDSL esterase/lipase At5g03610 from Arabidopsis thaliana (Mouse-ear cress).